A 356-amino-acid polypeptide reads, in one-letter code: Tungsten-containing aldehyde ferredoxin oxidoreductase cofactor-modifying protein (356 aa).

Residues 1-214 (MKYLYLEITS…PIVNELYKIA (214 aa)) form the Radical SAM core domain. Residues Cys12, Cys16, and Cys19 each coordinate [4Fe-4S] cluster.

Belongs to the radical SAM superfamily. It depends on [4Fe-4S] cluster as a cofactor.

Functionally, involved in the biosynthesis of a molybdopterin-based tungsten cofactor. The chain is Tungsten-containing aldehyde ferredoxin oxidoreductase cofactor-modifying protein (cmo) from Pyrococcus furiosus (strain ATCC 43587 / DSM 3638 / JCM 8422 / Vc1).